The sequence spans 143 residues: uncharacterized protein (143 aa).

Transmembrane regions (helical) follow at residues 20–39 (FKYC…WITV) and 113–135 (YFSL…ITGL).

Its subcellular location is the membrane. This is an uncharacterized protein from Saccharomyces cerevisiae (strain ATCC 204508 / S288c) (Baker's yeast).